Reading from the N-terminus, the 514-residue chain is Peptide chain release factor 3 (514 aa).

The region spanning 8–268 (KKRRTFAIIS…TFLEFAPEPH (261 aa)) is the tr-type G domain. GTP contacts are provided by residues 17-24 (SHPDAGKT), 85-89 (DTPGH), and 139-142 (NKLD).

The protein belongs to the TRAFAC class translation factor GTPase superfamily. Classic translation factor GTPase family. PrfC subfamily.

It is found in the cytoplasm. Increases the formation of ribosomal termination complexes and stimulates activities of RF-1 and RF-2. It binds guanine nucleotides and has strong preference for UGA stop codons. It may interact directly with the ribosome. The stimulation of RF-1 and RF-2 is significantly reduced by GTP and GDP, but not by GMP. This Streptococcus pyogenes serotype M49 (strain NZ131) protein is Peptide chain release factor 3.